Consider the following 498-residue polypeptide: Protein translocase subunit SecY (498 aa).

The next 10 helical transmembrane spans lie at 23 to 43 (FVIS…ISVI), 65 to 87 (FDLF…VGIS), 124 to 144 (ITRF…IALI), 163 to 183 (AFYI…GDII), 191 to 211 (GITL…FIVM), 229 to 249 (AINF…ISFV), 281 to 301 (AAGV…ITIA), 322 to 342 (PVGI…YSYI), 382 to 402 (FIGA…SLVL), and 406 to 426 (TTLS…MELY). Positions 478 to 488 (VEPTQDKKKNP) are enriched in basic and acidic residues. A disordered region spans residues 478-498 (VEPTQDKKKNPSDPLEVSQLW).

It belongs to the SecY/SEC61-alpha family. As to quaternary structure, component of the Sec protein translocase complex. Heterotrimer consisting of SecY, SecE and SecG subunits. The heterotrimers can form oligomers, although 1 heterotrimer is thought to be able to translocate proteins. Interacts with the ribosome. Interacts with SecDF, and other proteins may be involved. Interacts with SecA.

The protein resides in the cell membrane. The central subunit of the protein translocation channel SecYEG. Consists of two halves formed by TMs 1-5 and 6-10. These two domains form a lateral gate at the front which open onto the bilayer between TMs 2 and 7, and are clamped together by SecE at the back. The channel is closed by both a pore ring composed of hydrophobic SecY resides and a short helix (helix 2A) on the extracellular side of the membrane which forms a plug. The plug probably moves laterally to allow the channel to open. The ring and the pore may move independently. This is Protein translocase subunit SecY from Mycoplasmoides gallisepticum (strain R(low / passage 15 / clone 2)) (Mycoplasma gallisepticum).